We begin with the raw amino-acid sequence, 1266 residues long: Intermembrane phospholipid transporter YhdP (1266 aa).

The Cytoplasmic segment spans residues 1–5; that stretch reads MRRLP. Residues 6–26 traverse the membrane as a helical segment; the sequence is GILLLTGAALVVIAALLVSGL. Over 27-1266 the chain is Periplasmic; sequence RIALPHLDAW…LRQPRKEKAQ (1240 aa). The interval 94-103 is P-helix; the sequence is VWQSLLHMRW. Residues 1121–1144 are C-helix_2; sequence HAGQLLRLLSVDALMRKLRFDFRD. Residues 1203–1237 are C-helix_1; sequence ISATVGVAAAFAVNPIVGAAVFAASKVLGPLWSKV.

The protein localises to the cell inner membrane. Involved in outer membrane lipid homeostasis. Likely transports phospholipids between the inner membrane and the outer membrane. It would provide a bridge-like structure that protects phospholipids as they travel across the periplasm. The phosphate-containing molecules are captured along the length of a hydrophobic groove that is continuous along all but the extreme N-terminus of the protein. It also appears to control, directly or indirectly, levels of cyclic enterobacterial common antigen (cyclic ECA), a soluble cyclic ECA molecule present in the periplasm. In terms of biological role, tamB, YdbH and YhdP are redundant, but not equivalent, in performing an essential function for growth and maintaining lipid homeostasis in the outer membrane. The transport functions of TamB and YhdP could be differentiated according to the fatty acid saturation state of the phospholipids, with TamB transporting more unsaturated phospholipids and YhdP more saturated phospholipids. Any of these three proteins is sufficient for growth. The sequence is that of Intermembrane phospholipid transporter YhdP (yhdP) from Escherichia coli (strain K12).